A 72-amino-acid polypeptide reads, in one-letter code: Translation initiation factor IF-1 (72 aa).

Residues 1-72 enclose the S1-like domain; it reads MSKEDLIEFT…SKGRITFRFK (72 aa).

The protein belongs to the IF-1 family. Component of the 30S ribosomal translation pre-initiation complex which assembles on the 30S ribosome in the order IF-2 and IF-3, IF-1 and N-formylmethionyl-tRNA(fMet); mRNA recruitment can occur at any time during PIC assembly.

It is found in the cytoplasm. Its function is as follows. One of the essential components for the initiation of protein synthesis. Stabilizes the binding of IF-2 and IF-3 on the 30S subunit to which N-formylmethionyl-tRNA(fMet) subsequently binds. Helps modulate mRNA selection, yielding the 30S pre-initiation complex (PIC). Upon addition of the 50S ribosomal subunit IF-1, IF-2 and IF-3 are released leaving the mature 70S translation initiation complex. This Gluconobacter oxydans (strain 621H) (Gluconobacter suboxydans) protein is Translation initiation factor IF-1.